The primary structure comprises 285 residues: sn-2 palmitoyl-lipid 9-desaturase (285 aa).

2 helical membrane-spanning segments follow: residues 20-40 (WINVVFFGVFHALALLSPWFF) and 44-64 (ALGLLVFLHWLFGSIGICLGY). A Histidine box-1 motif is present at residues 65-70 (HRLLSH). The helical transmembrane segment at 81–101 (YAIALIGALALQGGPIFWVGG) threads the bilayer. The Histidine box-2 motif lies at 102 to 106 (HRQHH). Residues 169–189 (IPFALLLYVLGGWPFVFYGVF) traverse the membrane as a helical segment. The Histidine box-3 motif lies at 239-243 (HHTYP).

The protein belongs to the fatty acid desaturase type 2 family. It depends on Fe(2+) as a cofactor.

The protein resides in the membrane. It carries out the reaction a 1-acyl-2-hexadecanoyl-glycerolipid + 2 reduced [2Fe-2S]-[ferredoxin] + O2 + 2 H(+) = a 1-acyl-2-[(9Z)-hexadecenoyl]-glycerolipid + 2 oxidized [2Fe-2S]-[ferredoxin] + 2 H2O. It functions in the pathway lipid metabolism; fatty acid biosynthesis. In terms of biological role, desaturase involved in fatty acid biosynthesis. Introduces a double bond at carbon 9 of palmitoyl groups (16:0) attached to the sn-2 position of the glycerol moiety of membrane glycerolipids. This Nostoc sp. (strain 36) protein is sn-2 palmitoyl-lipid 9-desaturase.